Here is an 84-residue protein sequence, read N- to C-terminus: Beta-defensin 119 (84 aa).

Residues 1–21 (MKLLYLFLAILLAIEEPVISG) form the signal peptide. Intrachain disulfides connect cysteine 28-cysteine 55, cysteine 35-cysteine 49, and cysteine 39-cysteine 56.

Belongs to the beta-defensin family.

It localises to the secreted. Its function is as follows. Has antibacterial activity. This is Beta-defensin 119 (DEFB119) from Hylobates lar (Lar gibbon).